The primary structure comprises 341 residues: Golgi-associated RAB2 interactor protein 1B (341 aa).

This sequence belongs to the GARIN family. As to expression, expressed in testis (at protein level).

The protein resides in the golgi apparatus. RAB2B effector protein required for accurate acrosome formation and normal male fertility. In complex with RAB2A/RAB2B, seems to suppress excessive vesicle trafficking during acrosome formation. This Mus musculus (Mouse) protein is Golgi-associated RAB2 interactor protein 1B.